A 361-amino-acid chain; its full sequence is Phospho-N-acetylmuramoyl-pentapeptide-transferase (361 aa).

Helical transmembrane passes span 25–45, 72–92, 95–115, 133–153, 169–189, 200–220, 240–260, 264–284, 289–309, and 338–358; these read TGGA…WIIN, TPTM…VLWA, VNPY…VGFY, TRLL…VWLG, VVLN…VGAG, GLAI…AYLA, LAVL…FNAP, IFMG…IAVA, IVLA…IVQV, and QIVI…LATL.

This sequence belongs to the glycosyltransferase 4 family. MraY subfamily. Mg(2+) is required as a cofactor.

Its subcellular location is the cell inner membrane. It catalyses the reaction UDP-N-acetyl-alpha-D-muramoyl-L-alanyl-gamma-D-glutamyl-meso-2,6-diaminopimeloyl-D-alanyl-D-alanine + di-trans,octa-cis-undecaprenyl phosphate = di-trans,octa-cis-undecaprenyl diphospho-N-acetyl-alpha-D-muramoyl-L-alanyl-D-glutamyl-meso-2,6-diaminopimeloyl-D-alanyl-D-alanine + UMP. It functions in the pathway cell wall biogenesis; peptidoglycan biosynthesis. Catalyzes the initial step of the lipid cycle reactions in the biosynthesis of the cell wall peptidoglycan: transfers peptidoglycan precursor phospho-MurNAc-pentapeptide from UDP-MurNAc-pentapeptide onto the lipid carrier undecaprenyl phosphate, yielding undecaprenyl-pyrophosphoryl-MurNAc-pentapeptide, known as lipid I. This Rhodopseudomonas palustris (strain BisB5) protein is Phospho-N-acetylmuramoyl-pentapeptide-transferase.